The chain runs to 234 residues: Glucosamine-6-phosphate deaminase (234 aa).

The active-site Proton acceptor; for enolization step is Asp-62. The For ring-opening step role is filled by Asn-128. The Proton acceptor; for ring-opening step role is filled by His-130. Glu-135 (for ring-opening step) is an active-site residue.

This sequence belongs to the glucosamine/galactosamine-6-phosphate isomerase family. NagB subfamily.

The catalysed reaction is alpha-D-glucosamine 6-phosphate + H2O = beta-D-fructose 6-phosphate + NH4(+). Its pathway is amino-sugar metabolism; N-acetylneuraminate degradation; D-fructose 6-phosphate from N-acetylneuraminate: step 5/5. In terms of biological role, catalyzes the reversible isomerization-deamination of glucosamine 6-phosphate (GlcN6P) to form fructose 6-phosphate (Fru6P) and ammonium ion. The protein is Glucosamine-6-phosphate deaminase of Streptococcus equi subsp. zooepidemicus (strain H70).